Consider the following 341-residue polypeptide: Protein BEARSKIN2 (341 aa).

The NAC domain occupies 9–160; it reads VPPGFRFHPT…GWVVCRVFMK (152 aa). Residues 109–166 mediate DNA binding; it reads IGMRKTLVFYKGRAPHGQKTDWIMHEYRLEDADDPQANPSEDGWVVCRVFMKKNLFKV.

As to expression, expressed throughout the root cap, in both columella (COL) and lateral root cap (LRC) cells, with higher levels in the COL-adjoining LRC than the upper LRC. Also present at low levels expression in the tips of cotyledons and the cotyledon vasculature, as weel as in vasculature of the first pair of true leaves and at the hydathodes.

The protein localises to the nucleus. In terms of biological role, transcription activator. Together with BRN1 and SMB, regulates cellular maturation of root cap. Promotes the expression of genes involved in secondary cell walls (SCW) biosynthesis. The polypeptide is Protein BEARSKIN2 (BRN2) (Arabidopsis thaliana (Mouse-ear cress)).